The sequence spans 702 residues: Dissimilatory sulfite reductase MccA (702 aa).

The first 39 residues, 1–39 (MLSGWSVLKGGNMKYWDKALLSLFMCVSTLSIAATHAVA), serve as a signal peptide directing secretion. Residues cysteine 155, cysteine 158, histidine 159, and histidine 171 each coordinate heme c. Residues lysine 220 and tyrosine 297 each coordinate substrate. Positions 314, 317, 318, 351, 354, 355, 360, 372, 375, and 376 each coordinate heme c. Arginine 378 provides a ligand contact to substrate. Cysteine 411 is a binding site for Cu(+). Positions 423, 430, 433, 434, 437, 474, 477, 478, 491, 496, 499, and 500 each coordinate heme c. Cysteine 507 provides a ligand contact to Cu(+). 5 residues coordinate heme c: histidine 528, cysteine 574, cysteine 590, histidine 591, and histidine 675.

The protein belongs to the multiheme cytochrome c family. As to quaternary structure, homotrimer. It depends on Cu(+) as a cofactor. Requires heme c as cofactor.

It localises to the periplasm. It carries out the reaction [protein]-disulfide + hydrogen sulfide + 2 A + 3 H2O = [protein]-dithiol + sulfite + 2 AH2 + H(+). The protein operates within sulfur metabolism; sulfite reduction. Functionally, respiratory sulfite reductase that catalyzes the reduction of sulfite to sulfide in a single step, consuming six electrons in the process. Required for sulfite respiration under anaerobic growth conditions. Has only marginal activity with nitrite. The protein is Dissimilatory sulfite reductase MccA of Wolinella succinogenes (strain ATCC 29543 / DSM 1740 / CCUG 13145 / JCM 31913 / LMG 7466 / NCTC 11488 / FDC 602W) (Vibrio succinogenes).